Consider the following 346-residue polypeptide: 3',5'-cyclic-nucleotide phosphodiesterase (346 aa).

This sequence belongs to the cyclic nucleotide phosphodiesterase class-II family.

It carries out the reaction a nucleoside 3',5'-cyclic phosphate + H2O = a nucleoside 5'-phosphate + H(+). The protein is 3',5'-cyclic-nucleotide phosphodiesterase (cgs2) of Schizosaccharomyces pombe (strain 972 / ATCC 24843) (Fission yeast).